A 371-amino-acid polypeptide reads, in one-letter code: Carbamoyl phosphate synthase small chain (371 aa).

The segment at 1–186 is CPSase; that stretch reads MDYYNNDTPG…IHQGKTGDVV (186 aa). Serine 52, glycine 233, and glycine 235 together coordinate L-glutamine. Positions 185–371 constitute a Glutamine amidotransferase type-1 domain; that stretch reads VVVVVDCGIK…KFKKMVVGDA (187 aa). Cysteine 261 (nucleophile) is an active-site residue. The L-glutamine site is built by leucine 262, glutamine 265, asparagine 303, glycine 305, and tyrosine 306. Residues histidine 346 and glutamate 348 contribute to the active site.

This sequence belongs to the CarA family. As to quaternary structure, composed of two chains; the small (or glutamine) chain promotes the hydrolysis of glutamine to ammonia, which is used by the large (or ammonia) chain to synthesize carbamoyl phosphate. Tetramer of heterodimers (alpha,beta)4.

The catalysed reaction is hydrogencarbonate + L-glutamine + 2 ATP + H2O = carbamoyl phosphate + L-glutamate + 2 ADP + phosphate + 2 H(+). It catalyses the reaction L-glutamine + H2O = L-glutamate + NH4(+). It functions in the pathway amino-acid biosynthesis; L-arginine biosynthesis; carbamoyl phosphate from bicarbonate: step 1/1. Its pathway is pyrimidine metabolism; UMP biosynthesis via de novo pathway; (S)-dihydroorotate from bicarbonate: step 1/3. Small subunit of the glutamine-dependent carbamoyl phosphate synthetase (CPSase). CPSase catalyzes the formation of carbamoyl phosphate from the ammonia moiety of glutamine, carbonate, and phosphate donated by ATP, constituting the first step of 2 biosynthetic pathways, one leading to arginine and/or urea and the other to pyrimidine nucleotides. The small subunit (glutamine amidotransferase) binds and cleaves glutamine to supply the large subunit with the substrate ammonia. In Sulfolobus acidocaldarius (strain ATCC 33909 / DSM 639 / JCM 8929 / NBRC 15157 / NCIMB 11770), this protein is Carbamoyl phosphate synthase small chain.